The sequence spans 356 residues: Ubiquitin-conjugating enzyme E2 variant 3 (356 aa).

The interval 1 to 83 (MSDQPGTSRP…LEDLHNYHRE (83 aa)) is disordered. Over residues 18 to 32 (PTKTATRRRARPIAI) the composition is skewed to polar residues. Basic and acidic residues predominate over residues 63–76 (QPRKTVPKNVPLED). The UBC core domain occupies 169–324 (DIITEFMNRS…AREFVMKMAG (156 aa)).

Belongs to the ubiquitin-conjugating enzyme family. In terms of assembly, may interact with pmk-3. Expressed ubiquitously.

The protein resides in the nucleus. The protein localises to the cytoplasm. It localises to the cell projection. Its subcellular location is the dendrite. It is found in the axon. The protein resides in the cilium. In terms of biological role, possible negative regulator of polyubiquitination. May modulate the activity of the p38 MAP kinase pnk-3. May have a role in axon termination and synaptic transmission at motor and mechanosensory neurons. Plays a role in intraflagellar transport in cilia and cilium length regulation. The protein is Ubiquitin-conjugating enzyme E2 variant 3 of Caenorhabditis elegans.